The primary structure comprises 557 residues: Arginine--tRNA ligase (557 aa).

A 'HIGH' region motif is present at residues 132-142 (ANPTGDLHLGH).

It belongs to the class-I aminoacyl-tRNA synthetase family. As to quaternary structure, monomer.

The protein localises to the cytoplasm. It catalyses the reaction tRNA(Arg) + L-arginine + ATP = L-arginyl-tRNA(Arg) + AMP + diphosphate. The protein is Arginine--tRNA ligase of Geobacillus kaustophilus (strain HTA426).